The primary structure comprises 128 residues: RutC family protein BU371 (128 aa).

This sequence belongs to the RutC family.

The sequence is that of RutC family protein BU371 from Buchnera aphidicola subsp. Acyrthosiphon pisum (strain APS) (Acyrthosiphon pisum symbiotic bacterium).